The primary structure comprises 455 residues: Argininosuccinate lyase (455 aa).

This sequence belongs to the lyase 1 family. Argininosuccinate lyase subfamily.

The protein localises to the cytoplasm. The enzyme catalyses 2-(N(omega)-L-arginino)succinate = fumarate + L-arginine. Its pathway is amino-acid biosynthesis; L-arginine biosynthesis; L-arginine from L-ornithine and carbamoyl phosphate: step 3/3. The sequence is that of Argininosuccinate lyase from Shewanella oneidensis (strain ATCC 700550 / JCM 31522 / CIP 106686 / LMG 19005 / NCIMB 14063 / MR-1).